We begin with the raw amino-acid sequence, 288 residues long: Dysbindin protein homolog (288 aa).

A coiled-coil region spans residues A147 to D239.

It belongs to the dysbindin family. Component of the biogenesis of lysosome-related organelles complex-1 (BLOC-1) composed of Blos1, Blos2, Blos3, Blos4, Dysb, Muted, Pldn and Snapin. Interacts with Pldn and Snapin.

Its function is as follows. Component of the biogenesis of lysosome-related organelles complex-1 (BLOC-1) involved in pigment granule biogenesis and membrane trafficking in synapses. In response to high synaptic activity at neuromuscular junctions, stabilizes Pldn protein levels and, together with Pldn, plays a role in promoting efficient synaptic vesicle recycling and re-formation through early endosomes. The polypeptide is Dysbindin protein homolog (Drosophila melanogaster (Fruit fly)).